Here is a 355-residue protein sequence, read N- to C-terminus: Eukaryotic initiation factor 4A-13 (355 aa).

Residues 40–68 carry the Q motif motif; it reads DSFDAMGLQENLLRGIYAYGFEKPSAIQQ. The Helicase ATP-binding domain maps to 71-241; it reads IVPFCKGLDV…RKFMNQPVRI (171 aa). 84–91 lines the ATP pocket; the sequence is AQSGTGKT. Residues 189–192 carry the DEAD box motif; the sequence is DEAD. A Helicase C-terminal domain is found at 252–355; sequence GIKQFYVNVD…QQVSLVINYD (104 aa).

Belongs to the DEAD box helicase family. eIF4A subfamily. EIF4F is a multi-subunit complex, the composition of which varies with external and internal environmental conditions. It is composed of at least EIF4A, EIF4E and EIF4G.

The catalysed reaction is ATP + H2O = ADP + phosphate + H(+). ATP-dependent RNA helicase which is a subunit of the eIF4F complex involved in cap recognition and is required for mRNA binding to ribosome. In the current model of translation initiation, eIF4A unwinds RNA secondary structures in the 5'-UTR of mRNAs which is necessary to allow efficient binding of the small ribosomal subunit, and subsequent scanning for the initiator codon. The chain is Eukaryotic initiation factor 4A-13 from Nicotiana tabacum (Common tobacco).